We begin with the raw amino-acid sequence, 251 residues long: Aquaporin TIP1-1 (251 aa).

At Met1 the chain carries N-acetylmethionine. Residues 1 to 23 lie on the Cytoplasmic side of the membrane; sequence MPIRNIAIGRPDEATRPDALKAA. A helical membrane pass occupies residues 24–44; sequence LAEFISTLIFVVAGSGSGMAF. Residues 45 to 56 lie on the Vacuolar side of the membrane; the sequence is NKLTENGATTPS. Residues 57–77 traverse the membrane as a helical segment; that stretch reads GLVAAAVAHAFGLFVAVSVGA. At 78–103 the chain is on the cytoplasmic side; sequence NISGGHVNPAVTFGAFIGGNITLLRG. An NPA 1 motif is present at residues 85 to 87; the sequence is NPA. The helical transmembrane segment at 104 to 124 threads the bilayer; it reads ILYWIAQLLGSVVACLILKFA. At 125 to 143 the chain is on the vacuolar side; sequence TGGLAVPAFGLSAGVGVLN. The helical transmembrane segment at 144 to 164 threads the bilayer; the sequence is AFVFEIVMTFGLVYTVYATAI. Topologically, residues 165–172 are cytoplasmic; it reads DPKNGSLG. The chain crosses the membrane as a helical span at residues 173 to 193; that stretch reads TIAPIAIGFIVGANILAGGAF. Over 194–218 the chain is Vacuolar; the sequence is SGASMNPAVAFGPAVVSWTWTNHWV. The short motif at 199–201 is the NPA 2 element; that stretch reads NPA. Residues 219-239 traverse the membrane as a helical segment; sequence YWAGPLVGGGIAGLIYEVFFI. Over 240 to 251 the chain is Cytoplasmic; the sequence is NTTHEQLPTTDY.

The protein belongs to the MIP/aquaporin (TC 1.A.8) family. TIP (TC 1.A.8.10) subfamily. In terms of assembly, interacts with cucumber mosaic virus (CMV) Protein 1a. In terms of tissue distribution, in all the vegetative organs, but not in seeds. Preferentially expressed in roots.

The protein localises to the vacuole membrane. Functionally, water channel required to facilitate the transport of water, diffusion of amino acids and/or peptides from the vacuolar compartment to the cytoplasm. Does not promote glycerol permeability. May play a role in the control of cell turgor and cell expansion. Its function is impaired by Hg(2+). May be involved in a vesicle-based metabolite routing through or between pre-vacuolar compartments and the central vacuole. Transports urea in yeast cells in a pH-independent manner. Transports H(2)O(2) in yeast cells. The polypeptide is Aquaporin TIP1-1 (TIP1-1) (Arabidopsis thaliana (Mouse-ear cress)).